The primary structure comprises 303 residues: Probable 5-dehydro-4-deoxyglucarate dehydratase (303 aa).

It belongs to the DapA family.

The catalysed reaction is 5-dehydro-4-deoxy-D-glucarate + H(+) = 2,5-dioxopentanoate + CO2 + H2O. It functions in the pathway carbohydrate acid metabolism; D-glucarate degradation; 2,5-dioxopentanoate from D-glucarate: step 2/2. The sequence is that of Probable 5-dehydro-4-deoxyglucarate dehydratase from Acinetobacter baylyi (strain ATCC 33305 / BD413 / ADP1).